A 1030-amino-acid chain; its full sequence is Alpha-L-rhamnosidase (1030 aa).

The interval 133 to 297 (PSLEGSSWIW…GAGPWGRVAP (165 aa)) is carbohydrate-binding module-67 (CBM67). Ca(2+)-binding residues include Asp179 and Asn180. Alpha-L-rhamnose-binding positions include 179–180 (DN) and Trp203. Ca(2+) is bound by residues Asn228 and Pro233. Alpha-L-rhamnose is bound by residues Asp630, 634 to 636 (RDE), Asp643, and Trp695. The Proton donor role is filled by Glu636. The active-site Proton acceptor is Glu895. His916 serves as a coordination point for alpha-L-rhamnose.

The protein belongs to the glycosyl hydrolase 78 family.

It carries out the reaction Hydrolysis of terminal non-reducing alpha-L-rhamnose residues in alpha-L-rhamnosides.. Alpha-L-rhamnosidase which is able to degrade p-nitrophenyl-alpha-L-rhamnopyranoside (PNP-Rha) in vitro. Releases L-rhamnose from citrus flavonoids such as naringin, rutin and hesperidin, and the arabinogalactan-protein (AGP) gum arabic. AGPs are a family of proteoglycans that are localized on the cell surfaces of higher plants. Cleaves both the alpha-1,6 and the alpha-1,2-linked rhamnosyl residues. The polypeptide is Alpha-L-rhamnosidase (Streptomyces avermitilis (strain ATCC 31267 / DSM 46492 / JCM 5070 / NBRC 14893 / NCIMB 12804 / NRRL 8165 / MA-4680)).